A 527-amino-acid polypeptide reads, in one-letter code: tRNA (uracil(54)-C(5))-methyltransferase (527 aa).

The TRAM domain maps to 107–167 (PFERFQEIEV…DTYALADFLE (61 aa)). The [4Fe-4S] cluster site is built by Cys-182, Cys-188, Cys-191, and Cys-276. S-adenosyl-L-methionine contacts are provided by Gln-347, Tyr-383, Glu-404, and Asp-451. The active-site Nucleophile is Cys-478. Glu-517 serves as the catalytic Proton acceptor.

Belongs to the class I-like SAM-binding methyltransferase superfamily. RNA M5U methyltransferase family.

The enzyme catalyses uridine(54) in tRNA + S-adenosyl-L-methionine = 5-methyluridine(54) in tRNA + S-adenosyl-L-homocysteine + H(+). In terms of biological role, catalyzes the formation of 5-methyl-uridine at position 54 (m5U54) in all tRNA. May also have a role in tRNA stabilization or maturation. In Schizosaccharomyces pombe (strain 972 / ATCC 24843) (Fission yeast), this protein is tRNA (uracil(54)-C(5))-methyltransferase.